The sequence spans 226 residues: ATP-dependent dethiobiotin synthetase BioD (226 aa).

Residue 13–18 coordinates ATP; the sequence is DVGKTV. A Mg(2+)-binding site is contributed by threonine 17. The active site involves lysine 38. ATP is bound by residues aspartate 55, 116 to 119, and 176 to 177; these read EGAG and NR. Residues aspartate 55 and glutamate 116 each contribute to the Mg(2+) site.

It belongs to the dethiobiotin synthetase family. Homodimer. Mg(2+) is required as a cofactor.

The protein resides in the cytoplasm. The enzyme catalyses (7R,8S)-7,8-diammoniononanoate + CO2 + ATP = (4R,5S)-dethiobiotin + ADP + phosphate + 3 H(+). Its pathway is cofactor biosynthesis; biotin biosynthesis; biotin from 7,8-diaminononanoate: step 1/2. In terms of biological role, catalyzes a mechanistically unusual reaction, the ATP-dependent insertion of CO2 between the N7 and N8 nitrogen atoms of 7,8-diaminopelargonic acid (DAPA, also called 7,8-diammoniononanoate) to form a ureido ring. This Aliivibrio fischeri (strain MJ11) (Vibrio fischeri) protein is ATP-dependent dethiobiotin synthetase BioD.